We begin with the raw amino-acid sequence, 757 residues long: Relaxin receptor 1 (757 aa).

At 1–408 the chain is on the extracellular side; it reads MTSGSVFFYI…LENLLASIIQ (408 aa). One can recognise an LDL-receptor class A domain in the interval 26–63; sequence KCSLGYFPCGNITKCLPQLLHCNGVDDCGNQADEDNCG. 3 cysteine pairs are disulfide-bonded: Cys27–Cys40, Cys34–Cys53, and Cys47–Cys62. A glycan (N-linked (GlcNAc...) asparagine) is linked at Asn36. Ca(2+) is bound by residues Leu45, Asn48, Val50, Asp52, Asp58, and Glu59. Residues 91-127 form the LRRNT domain; it reads ETPECLVGSVPVQCLCRGLELDCDETNLRAVPSVSSN. Asn127 carries an N-linked (GlcNAc...) asparagine glycan. LRR repeat units follow at residues 151–172, 175–196, 199–220, 223–244, 248–269, 272–293, 296–317, 320–341, and 344–365; these read DLQK…AFRG, SLTK…VFED, RLEW…TFYG, SLIL…PLCQ, RLHW…TLIS, NLTV…TFAP, KLDE…IFKD, ELSQ…QFDY, and KLKS…MFRP. Residues Asn264 and Asn272 are each glycosylated (N-linked (GlcNAc...) asparagine). N-linked (GlcNAc...) asparagine glycosylation is present at Asn325. N-linked (GlcNAc...) asparagine glycosylation occurs at Asn368. Residues 409–429 traverse the membrane as a helical segment; that stretch reads RVFVWVVSAVTCFGNVFVICM. Over 430 to 443 the chain is Cytoplasmic; it reads RPYIRSENKLYAMS. The helical transmembrane segment at 444 to 464 threads the bilayer; that stretch reads IISLCCADCLMGIYLFVIGGF. At 465 to 486 the chain is on the extracellular side; the sequence is DLKFRGEYNKHAQLWMESTHCQ. Cys485 and Cys563 form a disulfide bridge. The helical transmembrane segment at 487 to 507 threads the bilayer; it reads LVGSLAILSTEVSVLLLTFLT. Residues 508–527 are Cytoplasmic-facing; that stretch reads LEKYICIVYPFRCVRPGKCR. A helical membrane pass occupies residues 528 to 548; it reads TITVLILIWITGFIVAFIPLS. Residues 549 to 577 lie on the Extracellular side of the membrane; it reads NKEFFKNYYGTNGVCFPLHSEDTESIGAQ. A helical transmembrane segment spans residues 578–598; sequence VYSVAIFLGINLAAFIIIVFS. Over 599–629 the chain is Cytoplasmic; the sequence is YGSMFYSVHQSAITATEIRNQVKKEMILAKR. A helical membrane pass occupies residues 630-650; the sequence is FFFIVFTDALCWIPIFVVKFL. At 651–660 the chain is on the extracellular side; it reads SLLQVEIPGT. The chain crosses the membrane as a helical span at residues 661 to 681; sequence ITSWVVIFILPINSALNPILY. Residues 682–757 are Cytoplasmic-facing; it reads TLTTRPFKEM…SQSTRLNSYS (76 aa).

The protein belongs to the G-protein coupled receptor 1 family. As to quaternary structure, interacts with C1QTNF8.

The protein resides in the cell membrane. Receptor for relaxins. The activity of this receptor is mediated by G proteins leading to stimulation of adenylate cyclase and an increase of cAMP. Binding of the ligand may also activate a tyrosine kinase pathway that inhibits the activity of a phosphodiesterase that degrades cAMP. The protein is Relaxin receptor 1 (RXFP1) of Pongo abelii (Sumatran orangutan).